The sequence spans 384 residues: Glucans biosynthesis protein C (384 aa).

10 helical membrane-spanning segments follow: residues 17-37, 54-74, 91-111, 140-160, 173-193, 212-232, 240-260, 274-294, 311-331, and 338-358; these read AWLMLLGIPFHISLIYSTHSW, FIHAFRMQVFFVISGYFSYML, VGIPMLTAIPLLTLPQFILLQ, LWFLLVLVILTTVSIGIFTWF, AISLAKLSLIFFLLGVAYAAI, FIVMQTLFYVPFFILGALAFI, FTTPSRGCTLGAAVAFIAYLL, TESVITMVMGLWMVNVVFSLG, ASLFIYLVHHPLTLFFGAYIT, and LIGFLCGLIFVMGIALILYEI.

The protein belongs to the acyltransferase 3 family. OpgC subfamily.

Its subcellular location is the cell membrane. It participates in glycan metabolism; osmoregulated periplasmic glucan (OPG) biosynthesis. Necessary for the succinyl substitution of periplasmic glucans. Could catalyze the transfer of succinyl residues from the cytoplasmic side of the membrane to the nascent glucan backbones on the periplasmic side of the membrane. This is Glucans biosynthesis protein C from Salmonella heidelberg (strain SL476).